A 354-amino-acid chain; its full sequence is Tsukushi (354 aa).

A signal peptide spans 1–17 (MLCSLFLLLLAVGRVQT). Residues 18–59 (TRPCFPGCQCEEETFGLFDSFSLIRVDCSSLGPHIVPVPIPL) enclose the LRRNT domain. 10 LRR repeats span residues 60-81 (DTAHLDLSSNRLETVNESVLAG), 86-107 (TLAGLDLSYNLLTSIMPSAFSR), 110-131 (YLESLDLSHNGLAALPAEIFTS), 133-154 (PLSDINLSHNRLREVSISAFTT), 160-180 (ALHVDLSHNLIHRLLPHPARA), 186-207 (TIQSLNLSWNRFRAVPDLRDLP), 208-228 (LRYLSLDGNPLATINPDAFMG), 231-253 (GLTHLSLASLQGILHLPPHGFRE), 256-277 (GLQVLDLSGNPKLKWAGAEVFS), and 281-302 (LLQELDLSGSSLVPLPEMLLHH). An N-linked (GlcNAc...) asparagine glycan is attached at Asn-75. Asn-138 carries an N-linked (GlcNAc...) asparagine glycan. Asn-191 carries an N-linked (GlcNAc...) asparagine glycan.

Interacts with FZD4 (via FZ domain); competes with WNT2B for binding to FZD4, inhibiting Wnt signaling and repressing peripheral eye development. Interacts with TGFB1; the interaction contributes to regulation of the hair cycle. Interacts with netrin. Interacts with CCN2. As to expression, expressed in macrophages in inflamed wounds with wound expression starting 2 days post-wounding (dpw) (at protein level). At 7 dpw, expressed from epidermis and extracellular matrix in the wound edge to neoepidermis and granulation tissue and in panniculus carnosus under the granulation tissue (at protein level). After fibrosis, disappears in the dermal area at 11 dpw (at protein level). Expressed in the hair follicle during morphogenesis and the hair cycle (at protein level). In embryonic brain, strong expression in the olfactory bulb, anterior olfactory nucleus, neocortex, piriform cortex, glial wedge, midline zipper glia, indusium griseum and the area surrounding the anterior commissure (AC) but not on AC axons (at protein level). In the adult eye, expressed in retinal layers, lens epithelium, and ciliary body where it is expressed predominantly in the inner non-pigmented layer. Expressed in almost all brain regions in the embryo, in the cortex and the lateral ventricle at P0 and is restricted to the subventricular zone and lateral nucleus of the amygdala in adults. Prominent expression in hippocampal regions from early postnatal stages until postnatal day 15 and gradually declines at later stages. Expressed in almost all bone regions in the femurs of juveniles. In the inner ear, accumulates in nonprosensory regions during early embryonic stages and in both nonprosensory and prosensory regions in late embryonic stages. In the adult ear, expressed in the organ of Corti, spiral ganglion cells, and the stria vascularis. Highly expressed in the liver where it is detected primarily in hepatocytes but not in non-parenchymal cells.

The protein resides in the secreted. Functionally, contributes to various developmental events and other processes such as wound healing and cholesterol homeostasis through its interactions with multiple signaling pathways. Wnt signaling inhibitor which competes with WNT2B for binding to Wnt receptor FZD4 and represses WNT2B-dependent development of the peripheral eye. Plays a role in regulating the hair cycle by controlling TGFB1 signaling. Required for the development of the anterior commissure in the brain by inhibiting neurite outgrowth. Essential for terminal differentiation of hippocampal neural stem cells. Plays a role in regulating bone elongation and bone mass by modulating growth plate chondrocyte function and overall body size. Required for development of the inner ear through its involvement in stereocilia formation in inner hair cells. Facilitates wound healing by inhibiting secretion of TGFB1 from macrophages which prevents myofibroblast differentiation, maintaining inflammatory cell quiescence. Plays a role in cholesterol homeostasis by reducing circulating high-density lipoprotein cholesterol, lowering cholesterol efflux capacity and decreasing cholesterol-to-bile acid conversion in the liver. In one study, shown to negatively regulate sympathetic innervation in brown fat, leading to reduced energy expenditure. In another study, shown not to affect brown fat thermogenic capacity, body weight gain or glucose homeostasis. This is Tsukushi from Mus musculus (Mouse).